The following is a 607-amino-acid chain: Glutamine--fructose-6-phosphate aminotransferase [isomerizing] (607 aa).

Catalysis depends on Cys2, which acts as the Nucleophile; for GATase activity. The Glutamine amidotransferase type-2 domain maps to 2–217 (CGIVGIVGHS…DGDWAVVRRD (216 aa)). SIS domains are found at residues 283 to 422 (LPFD…ARGV) and 455 to 597 (IARE…VDQP). The active-site For Fru-6P isomerization activity is the Lys602.

As to quaternary structure, homodimer.

The protein resides in the cytoplasm. The catalysed reaction is D-fructose 6-phosphate + L-glutamine = D-glucosamine 6-phosphate + L-glutamate. Functionally, catalyzes the first step in hexosamine metabolism, converting fructose-6P into glucosamine-6P using glutamine as a nitrogen source. The polypeptide is Glutamine--fructose-6-phosphate aminotransferase [isomerizing] (Mesorhizobium japonicum (strain LMG 29417 / CECT 9101 / MAFF 303099) (Mesorhizobium loti (strain MAFF 303099))).